The primary structure comprises 352 residues: MTAALHIGHLSKSFQNTPVLNDISLSLDPGEILFIIGASGCGKTTLLRCLAGFEQPDSGEISLSGKTIFSKNTNLPVRERRLGYLVQEGVLFPHLTVYRNIAYGLGNGKGRTAQERQRIEAMLELTGISELAGRYPHELSGGQQQRVALARALAPDPELILLDEPFSALDEQLRRQIREDMIAALRANGKSAVFVSHDREEALQYADRIAVMKQGRILQTASPHELYRQPADLDAALFIGEGIVFPAALNADGTADCRLGRLPVQSGAPAGTRGTLLIRPEQFSLHPHSAPAASIHAVVLKTTPKARHTEISLRAGQTVLTLNLPSAPTLSDGISAVLHLDGPALFFPGNTL.

Positions 5-239 constitute an ABC transporter domain; the sequence is LHIGHLSKSF…PADLDAALFI (235 aa). An ATP-binding site is contributed by 37–44; it reads GASGCGKT.

The protein belongs to the ABC transporter superfamily. Fe(3+) ion importer (TC 3.A.1.10) family. As to quaternary structure, the complex is composed of two ATP-binding proteins (FbpC), two transmembrane proteins (FbpB) and a solute-binding protein (FbpA).

It localises to the cell inner membrane. It catalyses the reaction Fe(3+)(out) + ATP + H2O = Fe(3+)(in) + ADP + phosphate + H(+). Part of the ABC transporter complex FbpABC involved in Fe(3+) ions import. Responsible for energy coupling to the transport system. The protein is Fe(3+) ions import ATP-binding protein FbpC of Neisseria gonorrhoeae (strain ATCC 700825 / FA 1090).